The chain runs to 150 residues: Urease accessory protein UreE (150 aa).

This sequence belongs to the UreE family.

It localises to the cytoplasm. Functionally, involved in urease metallocenter assembly. Binds nickel. Probably functions as a nickel donor during metallocenter assembly. The protein is Urease accessory protein UreE of Staphylococcus epidermidis (strain ATCC 35984 / DSM 28319 / BCRC 17069 / CCUG 31568 / BM 3577 / RP62A).